We begin with the raw amino-acid sequence, 318 residues long: Aspartate carbamoyltransferase catalytic subunit (318 aa).

Carbamoyl phosphate-binding residues include Arg-58 and Thr-59. Lys-86 lines the L-aspartate pocket. Residues Arg-108, His-141, and Gln-144 each contribute to the carbamoyl phosphate site. 2 residues coordinate L-aspartate: Arg-174 and Arg-226. Residues Gly-270 and Pro-271 each contribute to the carbamoyl phosphate site.

The protein belongs to the aspartate/ornithine carbamoyltransferase superfamily. ATCase family. As to quaternary structure, heterododecamer (2C3:3R2) of six catalytic PyrB chains organized as two trimers (C3), and six regulatory PyrI chains organized as three dimers (R2).

It carries out the reaction carbamoyl phosphate + L-aspartate = N-carbamoyl-L-aspartate + phosphate + H(+). The protein operates within pyrimidine metabolism; UMP biosynthesis via de novo pathway; (S)-dihydroorotate from bicarbonate: step 2/3. Catalyzes the condensation of carbamoyl phosphate and aspartate to form carbamoyl aspartate and inorganic phosphate, the committed step in the de novo pyrimidine nucleotide biosynthesis pathway. The polypeptide is Aspartate carbamoyltransferase catalytic subunit (Lactobacillus delbrueckii subsp. bulgaricus (strain ATCC BAA-365 / Lb-18)).